A 391-amino-acid chain; its full sequence is 4-hydroxy-3-methylbut-2-en-1-yl diphosphate synthase (flavodoxin) (391 aa).

[4Fe-4S] cluster is bound by residues Cys282, Cys285, Cys317, and Glu324.

Belongs to the IspG family. The cofactor is [4Fe-4S] cluster.

The catalysed reaction is (2E)-4-hydroxy-3-methylbut-2-enyl diphosphate + oxidized [flavodoxin] + H2O + 2 H(+) = 2-C-methyl-D-erythritol 2,4-cyclic diphosphate + reduced [flavodoxin]. It participates in isoprenoid biosynthesis; isopentenyl diphosphate biosynthesis via DXP pathway; isopentenyl diphosphate from 1-deoxy-D-xylulose 5-phosphate: step 5/6. Functionally, converts 2C-methyl-D-erythritol 2,4-cyclodiphosphate (ME-2,4cPP) into 1-hydroxy-2-methyl-2-(E)-butenyl 4-diphosphate. This chain is 4-hydroxy-3-methylbut-2-en-1-yl diphosphate synthase (flavodoxin), found in Acidothermus cellulolyticus (strain ATCC 43068 / DSM 8971 / 11B).